Consider the following 298-residue polypeptide: Protease HtpX homolog (298 aa).

The next 2 helical transmembrane spans lie at 15–35 (YVMIGFAILVLFIGAAVGYVF) and 39–59 (AMAGIIMAAVIAAIYMAMMIA). His143 is a binding site for Zn(2+). The active site involves Glu144. His147 provides a ligand contact to Zn(2+). The next 2 helical transmembrane spans lie at 158–178 (IALALSSAIAMLVNIGMRSFW) and 197–217 (IVMMIISIVLVILGPIATTIA). Glu226 lines the Zn(2+) pocket.

It belongs to the peptidase M48B family. Requires Zn(2+) as cofactor.

The protein localises to the cell membrane. The polypeptide is Protease HtpX homolog (Pediococcus pentosaceus (strain ATCC 25745 / CCUG 21536 / LMG 10740 / 183-1w)).